The primary structure comprises 406 residues: Phosphorylase b kinase gamma catalytic chain, liver/testis isoform (406 aa).

Positions Y24 to F291 constitute a Protein kinase domain. ATP is bound by residues I30–V38 and K53. The active-site Proton acceptor is D153. The tract at residues Q306–P330 is calmodulin-binding (domain-N). Residues V346–R370 are calmodulin-binding (domain-C).

It belongs to the protein kinase superfamily. CAMK Ser/Thr protein kinase family. In terms of assembly, hexadecamer of 4 heterotetramers, each composed of alpha, beta, gamma, and delta subunits. Alpha (PHKA1 or PHKA2) and beta (PHKB) are regulatory subunits, gamma (PHKG1 or PHKG2) is the catalytic subunit, and delta is calmodulin.

It catalyses the reaction 2 ATP + phosphorylase b = 2 ADP + phosphorylase a.. In terms of biological role, catalytic subunit of the phosphorylase b kinase (PHK), which mediates the neural and hormonal regulation of glycogen breakdown (glycogenolysis) by phosphorylating and thereby activating glycogen phosphorylase. May regulate glycogeneolysis in the testis. In vitro, phosphorylates PYGM. The chain is Phosphorylase b kinase gamma catalytic chain, liver/testis isoform (Phkg2) from Mus musculus (Mouse).